The chain runs to 367 residues: Glutamate 5-kinase (367 aa).

Lys-10 is an ATP binding site. Positions 137 and 149 each coordinate substrate. ATP is bound by residues 169–170 (TD) and 211–217 (TGGMATK). The region spanning 275 to 353 (AGEITVDDGA…QQISEILGYE (79 aa)) is the PUA domain.

The protein belongs to the glutamate 5-kinase family.

It localises to the cytoplasm. The catalysed reaction is L-glutamate + ATP = L-glutamyl 5-phosphate + ADP. It participates in amino-acid biosynthesis; L-proline biosynthesis; L-glutamate 5-semialdehyde from L-glutamate: step 1/2. In terms of biological role, catalyzes the transfer of a phosphate group to glutamate to form L-glutamate 5-phosphate. This chain is Glutamate 5-kinase, found in Yersinia pestis bv. Antiqua (strain Antiqua).